A 906-amino-acid chain; its full sequence is Patched domain-containing protein 3 (906 aa).

A disordered region spans residues 1–70 (MISSKVAPGE…LGQEAPPPRR (70 aa)). N-linked (GlcNAc...) asparagine glycosylation is found at asparagine 148 and asparagine 235. 11 helical membrane passes run 338–358 (TVIP…VVSC), 370–390 (VAVF…GLML), 392–412 (LGVP…GVGV), 442–462 (VAVS…TGIT), 476–496 (GTTL…VMAL), 559–579 (FIVV…CFQV), 760–780 (VMIA…HPVC), 782–802 (LWVT…MAFW), 814–834 (LVIC…AFVS), 848–868 (LYLL…GVCV), and 883–903 (IMFL…PVFL). The SSD domain maps to 339–496 (VIPLFHLAYI…ITCFGAVMAL (158 aa)).

It belongs to the patched family. In terms of tissue distribution, expressed in germ cells of the testis (at protein level).

Its subcellular location is the cell projection. The protein resides in the cilium. It localises to the flagellum membrane. The protein localises to the endoplasmic reticulum membrane. In terms of biological role, may play a role in sperm development or sperm function. However, does not appear to have an essential role in spermatogenesis or male fertility. In Mus musculus (Mouse), this protein is Patched domain-containing protein 3 (Ptchd3).